A 190-amino-acid polypeptide reads, in one-letter code: NADH dehydrogenase [ubiquinone] iron-sulfur protein 3 (190 aa).

The protein belongs to the complex I 30 kDa subunit family. In terms of assembly, complex I is composed of about 45 different subunits. This is a component of the iron-sulfur (IP) fragment of the enzyme.

Its subcellular location is the mitochondrion inner membrane. It catalyses the reaction a ubiquinone + NADH + 5 H(+)(in) = a ubiquinol + NAD(+) + 4 H(+)(out). Functionally, core subunit of the mitochondrial membrane respiratory chain NADH dehydrogenase (Complex I) that is believed to belong to the minimal assembly required for catalysis. Complex I functions in the transfer of electrons from NADH to the respiratory chain. The immediate electron acceptor for the enzyme is believed to be ubiquinone. This chain is NADH dehydrogenase [ubiquinone] iron-sulfur protein 3 (NAD9), found in Solanum tuberosum (Potato).